The primary structure comprises 400 residues: Nicotinate phosphoribosyltransferase (400 aa).

A Phosphohistidine; by autocatalysis modification is found at histidine 220.

It belongs to the NAPRTase family. Post-translationally, transiently phosphorylated on a His residue during the reaction cycle. Phosphorylation strongly increases the affinity for substrates and increases the rate of nicotinate D-ribonucleotide production. Dephosphorylation regenerates the low-affinity form of the enzyme, leading to product release.

The enzyme catalyses nicotinate + 5-phospho-alpha-D-ribose 1-diphosphate + ATP + H2O = nicotinate beta-D-ribonucleotide + ADP + phosphate + diphosphate. Its pathway is cofactor biosynthesis; NAD(+) biosynthesis; nicotinate D-ribonucleotide from nicotinate: step 1/1. Its function is as follows. Catalyzes the synthesis of beta-nicotinate D-ribonucleotide from nicotinate and 5-phospho-D-ribose 1-phosphate at the expense of ATP. The chain is Nicotinate phosphoribosyltransferase from Cronobacter sakazakii (strain ATCC BAA-894) (Enterobacter sakazakii).